A 22-amino-acid chain; its full sequence is Melittin-like peptide (22 aa).

A Glutamine amide modification is found at Gln22.

Expressed by the skin dorsal glands.

It localises to the secreted. In Rana temporaria (European common frog), this protein is Melittin-like peptide.